Reading from the N-terminus, the 241-residue chain is 1-(5-phosphoribosyl)-5-[(5-phosphoribosylamino)methylideneamino] imidazole-4-carboxamide isomerase (241 aa).

Asp-8 functions as the Proton acceptor in the catalytic mechanism. The active-site Proton donor is Asp-129.

Belongs to the HisA/HisF family.

The protein resides in the cytoplasm. It carries out the reaction 1-(5-phospho-beta-D-ribosyl)-5-[(5-phospho-beta-D-ribosylamino)methylideneamino]imidazole-4-carboxamide = 5-[(5-phospho-1-deoxy-D-ribulos-1-ylimino)methylamino]-1-(5-phospho-beta-D-ribosyl)imidazole-4-carboxamide. Its pathway is amino-acid biosynthesis; L-histidine biosynthesis; L-histidine from 5-phospho-alpha-D-ribose 1-diphosphate: step 4/9. The protein is 1-(5-phosphoribosyl)-5-[(5-phosphoribosylamino)methylideneamino] imidazole-4-carboxamide isomerase of Novosphingobium aromaticivorans (strain ATCC 700278 / DSM 12444 / CCUG 56034 / CIP 105152 / NBRC 16084 / F199).